The primary structure comprises 712 residues: Ribosomal RNA large subunit methyltransferase K/L (712 aa).

Positions Gln-42–Leu-153 constitute a THUMP domain.

The protein belongs to the methyltransferase superfamily. RlmKL family.

The protein resides in the cytoplasm. It catalyses the reaction guanosine(2445) in 23S rRNA + S-adenosyl-L-methionine = N(2)-methylguanosine(2445) in 23S rRNA + S-adenosyl-L-homocysteine + H(+). It carries out the reaction guanosine(2069) in 23S rRNA + S-adenosyl-L-methionine = N(2)-methylguanosine(2069) in 23S rRNA + S-adenosyl-L-homocysteine + H(+). Functionally, specifically methylates the guanine in position 2445 (m2G2445) and the guanine in position 2069 (m7G2069) of 23S rRNA. This chain is Ribosomal RNA large subunit methyltransferase K/L, found in Stenotrophomonas maltophilia (strain K279a).